The sequence spans 866 residues: Dynamin-2 (866 aa).

Positions 28-294 (HLDLPQIAVV…LTNHIRESLP (267 aa)) constitute a Dynamin-type G domain. The G1 motif stretch occupies residues 38–45 (GGQSAGKS). Positions 41, 43, 44, 45, 46, 59, and 60 each coordinate GDP. Residues 64 to 66 (VTR) form a G2 motif region. The segment at 136 to 139 (DLPG) is G3 motif. The G4 motif stretch occupies residues 205 to 208 (TKLD). K206, D208, and D211 together coordinate GDP. Y231 bears the Phosphotyrosine mark. The tract at residues 235–238 (VNRS) is G5 motif. 3 residues coordinate GDP: N236, R237, and Q239. At K299 the chain carries N6-acetyllysine. The PH domain occupies 515 to 621 (QVIRRGWLTI…WKASFLRAGV (107 aa)). The residue at position 593 (Y593) is a Phosphotyrosine. At K594 the chain carries N6-acetyllysine. In terms of domain architecture, GED spans 649–740 (VETIRNLVDS…IIGDISTSTV (92 aa)). The segment at 737-866 (TSTVSTPVPP…IRPAEPSLLD (130 aa)) is disordered. T751 carries the post-translational modification Phosphothreonine. Residues 752 to 763 (WIQNTSSHSPTP) are compositionally biased toward polar residues. S760 carries the phosphoserine; by CDK1 modification. 3 stretches are compositionally biased toward pro residues: residues 784-794 (TPGPPLIPVPV), 802-811 (PPIPSRPGPH), and 822-851 (SAPPQIPSRPARIPPGIPPGVPSRRPPAAP).

It belongs to the TRAFAC class dynamin-like GTPase superfamily. Dynamin/Fzo/YdjA family. In terms of assembly, oligomerizes into a helical polymer that self-assembles around the vesicle membrane, when associated to the menbrane through lipid binding. Interacts with SHANK1 and SHANK2. Interacts with SNX9. Interacts (via C-terminal proline-rich domain (PRD)) with SNX18 (via SH3 domain); this interaction regulates ATG9A and ATG16L1 trafficking from recycling endosomes to sites of autophagosome formation. Interacts with SNX33 (via SH3 domain). Interacts with MYO1E (via SH3 domain). Interacts with PSTPIP1 (via SH3 domain). Interacts with CTNND2. Interacts (via C-terminal proline-rich domain (PRD)) with BIN1 (via SH3 domain); this interaction allows the recruitment of DNM2 to the membrane tubules and inhibits self-assembly-stimulated GTPase activity on the membrane. Interacts with GABARAP, GABARAPL1 and GABARAPL2. Interacts with MAP1LC3B (the lipidate and non-lipidated LC3 form); this interaction mediates recycling endosome scission leading to autophagosome release. Interacts with ITSN1. Interacts with MYOF. Interacts (via C-terminal proline-rich domain (PRD)) with SH3BP4 (via SH3 domain); this interaction controls the GTPase activity and is prevented by EGFR-induced tyrosine phosphorylation of either DNM2 or SH3BP4. May interact with PIK3C3. May be a component of a complex composed of RAB5A (in GDP-bound form), DYN2 and PIK3C3. Interacts with SDC4; this interaction is markedly enhanced at focal ahesion site upon induction of focal adhesions and stress-fiber formation. Interacts with ACTN1. Interacts with CTTN; this interaction stimulates the intrinsic GTPase activity of DNM2 and stabilizes the association of DNM2 and actin filaments; in addition this interaction is stimulated by ligand binding to the receptor, leading to the recruitment of the DNM2-CTTN complex to the sequestered receptor-ligand complex to its internalization. Interacts with NOSTRIN (via SH3 domain); this interaction allows the recruitment of NOS3 to dynamin-positive structures. Interacts with TUBG1; this interaction may participate in centrosome cohesion. In terms of processing, phosphorylation at Ser-844 by GSK3-alpha relieves the inhibition of BIN1 and promotes endocytosis. Phosphorylation at Ser-760 by CDK1 is greatly increased upon mitotic entry. It regulates cytokinesis downstream of calcineurin, and does not affect clathrin-mediated endocytosis. Dephosphorylated by calcineurin/PP2 during cytokinesis in a Ca(2+)- and calmodulin-dependent manner. Phosphorylated on tyrosine residues by EGFR and after activation of SRC.

The protein resides in the cytoplasm. The protein localises to the cytoskeleton. Its subcellular location is the cytoplasmic vesicle. It localises to the clathrin-coated vesicle. It is found in the cell projection. The protein resides in the uropodium. The protein localises to the endosome. Its subcellular location is the microtubule organizing center. It localises to the centrosome. It is found in the centriole. The protein resides in the recycling endosome. The protein localises to the phagocytic cup. Its subcellular location is the phagosome membrane. It localises to the podosome. It is found in the cell junction. The protein resides in the postsynaptic density. The protein localises to the synapse. Its subcellular location is the synaptosome. It localises to the midbody. It is found in the membrane. The protein resides in the clathrin-coated pit. It carries out the reaction GTP + H2O = GDP + phosphate + H(+). Functionally, catalyzes the hydrolysis of GTP and utilizes this energy to mediate vesicle scission at plasma membrane during endocytosis and filament remodeling at many actin structures during organization of the actin cytoskeleton. Plays an important role in vesicular trafficking processes, namely clathrin-mediated endocytosis (CME), exocytic and clathrin-coated vesicle from the trans-Golgi network, and PDGF stimulated macropinocytosis. During vesicular trafficking process, associates to the membrane, through lipid binding, and self-assembles into ring-like structure through oligomerization to form a helical polymer around the vesicle membrane and leading to vesicle scission. Plays a role in organization of the actin cytoskeleton by mediating arrangement of stress fibers and actin bundles in podocytes. During organization of the actin cytoskeleton, self-assembles into ring-like structure that directly bundles actin filaments to form typical membrane tubules decorated with dynamin spiral polymers. Self-assembly increases GTPase activity and the GTP hydrolysis causes the rapid depolymerization of dynamin spiral polymers, and results in dispersion of actin bundles. Remodels, through its interaction with CTTN, bundled actin filaments in a GTPase-dependent manner and plays a role in orchestrating the global actomyosin cytoskeleton. The interaction with CTTN stabilizes the interaction of DNM2 and actin filaments and stimulates the intrinsic GTPase activity that results in actin filament-barbed ends and increases the sensitivity of filaments in bundles to the actin depolymerizing factor, CFL1. Plays a role in the autophagy process, by participating in the formation of ATG9A vesicles destined for the autophagosomes through its interaction with SNX18, by mediating recycling endosome scission leading to autophagosome release through MAP1LC3B interaction. Also regulates maturation of apoptotic cell corpse-containing phagosomes by recruiting PIK3C3 to the phagosome membrane. Also plays a role in cytokinesis. May participate in centrosome cohesion through its interaction with TUBG1. Plays a role in the regulation of neuron morphology, axon growth and formation of neuronal growth cones. Involved in membrane tubulation. In Bos taurus (Bovine), this protein is Dynamin-2.